The chain runs to 388 residues: GDP-4-keto-6-deoxy-D-mannose 3-dehydratase (388 aa).

26 to 29 provides a ligand contact to GDP-4-dehydro-alpha-D-rhamnose; that stretch reads KMFT. A helical transmembrane segment spans residues 49-69; the sequence is YAVMVSSGSTANLLMIAALFF. Pyridoxal 5'-phosphate is bound by residues 56-57, W88, E162, and S183; that span reads GS. The active-site Proton donor/acceptor is H188. Residue H215 participates in L-glutamate binding. R219 is a GDP-4-dehydro-alpha-D-rhamnose binding site. N248 provides a ligand contact to pyridoxal 5'-phosphate. L-glutamate is bound at residue R250. E329 contacts GDP-4-dehydro-alpha-D-rhamnose.

It belongs to the DegT/DnrJ/EryC1 family. In terms of assembly, homodimer. Pyridoxal 5'-phosphate serves as cofactor.

The protein resides in the cell membrane. The enzyme catalyses GDP-4-dehydro-alpha-D-rhamnose + L-glutamate = GDP-4-dehydro-3,6-dideoxy-alpha-D-mannose + 2-oxoglutarate + NH4(+). It functions in the pathway nucleotide-sugar metabolism; GDP-L-colitose biosynthesis. Involved in the biosynthesis of L-colitose, a 3,6-dideoxyhexose present in the O-antigen region of lipopolysaccharides (LPS), where it serves as an antigenic determinant and is vital for bacterial defense and survival. Catalyzes the removal of the C3'-hydroxyl group from GDP-4-keto-6-deoxy-D-mannose via a combined transamination-deoxygenation reaction. The catalysis is initiated by a transamination step in which pyridoxal 5'-phosphate (PLP) is converted to pyridoxamine 5'-phosphate (PMP) in the presence of L-glutamate. This coenzyme then forms a Schiff base with GDP-4-keto-6-deoxy-D-mannose and the resulting adduct undergoes a PMP-mediated beta-dehydration reaction to give a sugar enamine intermediate, which after tautomerization and hydrolysis to release ammonia yields GDP-4-keto-3,6-dideoxy-D-mannose as a product. In vitro, is able to catalyze the formation of GDP-4-keto-3,6-dideoxymannose using GDP-perosamine rather than GDP-4-keto-6-deoxymannose as a substrate, with no need of glutamate. This Escherichia coli O55:H7 (strain CB9615 / EPEC) protein is GDP-4-keto-6-deoxy-D-mannose 3-dehydratase.